A 59-amino-acid chain; its full sequence is Potassium channel toxin alpha-KTx 1.2 (59 aa).

An N-terminal signal peptide occupies residues 1-22 (MKILSVLLLALIICSIIDWSEG). Position 23 is a pyrrolidone carboxylic acid (glutamine 23). 3 disulfides stabilise this stretch: cysteine 29–cysteine 50, cysteine 35–cysteine 55, and cysteine 39–cysteine 57. The tract at residues 48-55 (GKCMNKKC) is interaction with Ca(2+)-activated K(+) channels.

It belongs to the short scorpion toxin superfamily. Potassium channel inhibitor family. Alpha-KTx 01 subfamily. In terms of tissue distribution, expressed by the venom gland.

It is found in the secreted. Functionally, blocks calcium-activated potassium channels (Kd=43 nM on KCa1.1/KCNMA1). Has a potent presynaptic facilitatory action, with less effect on direct muscle stimulation. This chain is Potassium channel toxin alpha-KTx 1.2, found in Leiurus hebraeus (Hebrew deathstalker scorpion).